We begin with the raw amino-acid sequence, 1202 residues long: MVQKNTFEAMKIGLASPDKIRQWSWGEVKKPETINYRTLKPEKEGLFCEKIFGPTKDYECNCGKYKRIRYKGIVCEKCGVEVTKSKVRRERMGHIELATPVSHIWYFKGIPSRMGLLLDMSPRALEKVLYFASFVVIDPGKTDLYEKQLLTEQEYEEYCDKYEEDVDFRAKMGAEAIKELLQKIDLQEEYKNLTETFEGSTGQKKVRILRRLEVVEAFIESKNDPSWMIMDVIPVIPPDIRPMVQLEGGRFATSDLNDLYRRVINRNNRLKRLLDIGSPEIIVRNEKRMLQEAVDALIDNGRRGKPVTGPGNRPLKSLSDMLKGKSGRFRQNLLGKRVDYSGRSVIVIGPNLKFYQCGLPKKMALELFKPFVIRELVKREISHNVKNAKKLVERENDKVWDVLEDIIVDHPVLLNRAPTLHRLGIQAFEPILVEGKAIKLHPLVCTAYNADFDGDQMAVHLPLSPEAQAEARLLMLSTNNILAPKDGKPITTPSQDMVLGSFYMTTRKEGQKGEGLIFKDIDEMMLAYAMHYVTLQTIVKVRRNSVNNDGTSKIVESTVGRFIFNEGIPQDLGMVNRNEDPYSLEVDLQVDKKMLSKIIDLTFRRYGNIRTAELLDYIKSMGYKYSTIGALTISMGDITIPDSKKGIIEQAEQRIDMVQDIYLQGDITNEERYKKVIEIWEQCIKDVTRALMTNLPADNNLNIMAVSGARGSENQIRQLGGMRGLMSDTAGNTIEIPITSNFREGLSVQEFFISTHGSRKGLSDTALRTADSGYLTRRLVDVSQDVIITEDDCGTDEYIVAKEIKDGNRQVEDLKSRIIGRYAFEDILDLDTGEIIVHKNDMINEAIAERIESKGIKEVKVRSVLGCKMKHGVCAKCYGRNLATGKPVNIGEAVGIIAAQSIGEPGTQLTMRTFHSGGIAGVGITSGLPRVEELFEARKPKGLAYITEIEGTVKIQENKKRNDVIVTSEDGEEQVYQIPYGAHIRVNEGDHVEKGEPLTEGSINPQDILRVNGAEGVRDYIIREVQKVYRLQGVDIDDKHIEIIIRQMMSKIKVEESGDSGFLSGSVVDARDFKMTNEQLIKEGKTPATGTHSLMGITKASLATESFLSAASFQETTRVLTETSIKGKVDHLIGLKENVIIGKLIPAGTGIAKYDRIEVDYDGKAEDDMIEAEKAQASNDSEEAEESTIISGNYESLQDEDK.

4 residues coordinate Zn(2+): Cys60, Cys62, Cys75, and Cys78. The segment at 301–320 is disordered; that stretch reads GRRGKPVTGPGNRPLKSLSD. 3 residues coordinate Mg(2+): Asp451, Asp453, and Asp455. Residues Cys793, Cys867, Cys874, and Cys877 each contribute to the Zn(2+) site. Positions 1168–1202 are disordered; sequence DMIEAEKAQASNDSEEAEESTIISGNYESLQDEDK.

This sequence belongs to the RNA polymerase beta' chain family. The RNAP catalytic core consists of 2 alpha, 1 beta, 1 beta' and 1 omega subunit. When a sigma factor is associated with the core the holoenzyme is formed, which can initiate transcription. It depends on Mg(2+) as a cofactor. Zn(2+) serves as cofactor.

It carries out the reaction RNA(n) + a ribonucleoside 5'-triphosphate = RNA(n+1) + diphosphate. DNA-dependent RNA polymerase catalyzes the transcription of DNA into RNA using the four ribonucleoside triphosphates as substrates. The chain is DNA-directed RNA polymerase subunit beta' from Finegoldia magna (strain ATCC 29328 / DSM 20472 / WAL 2508) (Peptostreptococcus magnus).